Consider the following 533-residue polypeptide: 2-isopropylmalate synthase (533 aa).

One can recognise a Pyruvate carboxyltransferase domain in the interval 8–269 (IIIFDTTLRD…YYNPFLGRPA (262 aa)). Positions 17, 208, 210, and 244 each coordinate Mn(2+). The regulatory domain stretch occupies residues 408–533 (RLELVQVSCG…VSANPAKASL (126 aa)).

The protein belongs to the alpha-IPM synthase/homocitrate synthase family. LeuA type 1 subfamily. In terms of assembly, homodimer. Mn(2+) is required as a cofactor.

The protein resides in the cytoplasm. It catalyses the reaction 3-methyl-2-oxobutanoate + acetyl-CoA + H2O = (2S)-2-isopropylmalate + CoA + H(+). It functions in the pathway amino-acid biosynthesis; L-leucine biosynthesis; L-leucine from 3-methyl-2-oxobutanoate: step 1/4. Its function is as follows. Catalyzes the condensation of the acetyl group of acetyl-CoA with 3-methyl-2-oxobutanoate (2-ketoisovalerate) to form 3-carboxy-3-hydroxy-4-methylpentanoate (2-isopropylmalate). This chain is 2-isopropylmalate synthase, found in Picosynechococcus sp. (strain ATCC 27264 / PCC 7002 / PR-6) (Agmenellum quadruplicatum).